The primary structure comprises 106 residues: Probable insulin-like peptide beta-type 1 (106 aa).

The signal sequence occupies residues M1 to C19. Residues R20–R51 constitute a propeptide, removed; by convertase egl-3. Disulfide bonds link C60-C89, C72-C102, C76-C103, and C88-C93.

Belongs to the insulin family. Expressed by ASI and ASJ sensory neurons and weakly by ventral cord motor neurons.

It is found in the secreted. Its function is as follows. Probable insulin-like peptide which negatively regulates synapse development at the neuromuscular junctions. Probably acts as a daf-2/InsR agonist ligand to prevent dauer formation under optimal environmental conditions. The polypeptide is Probable insulin-like peptide beta-type 1 (ins-4) (Caenorhabditis elegans).